We begin with the raw amino-acid sequence, 553 residues long: Hydroxylamine reductase (553 aa).

4 residues coordinate [2Fe-2S] cluster: Cys3, Cys6, Cys18, and Cys25. His249, Glu273, Cys317, Cys405, Cys433, Cys459, Glu493, and Lys495 together coordinate hybrid [4Fe-2O-2S] cluster. Cys405 carries the cysteine persulfide modification.

Belongs to the HCP family. [2Fe-2S] cluster is required as a cofactor. It depends on hybrid [4Fe-2O-2S] cluster as a cofactor.

The protein resides in the cytoplasm. The catalysed reaction is A + NH4(+) + H2O = hydroxylamine + AH2 + H(+). Catalyzes the reduction of hydroxylamine to form NH(3) and H(2)O. This Actinobacillus succinogenes (strain ATCC 55618 / DSM 22257 / CCUG 43843 / 130Z) protein is Hydroxylamine reductase.